The sequence spans 617 residues: Vacuolar protein sorting-associated protein 33A (617 aa).

The tract at residues 268-287 (NFPSDGALPGGGGSGPRVEE) is disordered.

It belongs to the STXBP/unc-18/SEC1 family. Component of the class C core vacuole/endosome tethering (CORVET) complex composed of at least Vps8, dor/Vps18, car/Vps33A and Vps16A; unlike in other species, Vps11 is not part of the Drosophila complex. Due to the reduced number of components the Drosophila CORVET complex is often referred to as the miniCORVET complex. Interacts with ema. Component of the homotypic fusion and vacuole protein sorting (HOPS) complex, composed of Vps16A, car/Vps33A, dor/Vps18, Vps39, Vps11 and lt/Vps41. The tethering complex core made up of Vps16A, car/Vps33A and dor/Vps18 and shared by both HOPS and CORVET, preferentially associates with CORVET specific Vps8 over HOPS specific lt/Vps41. Interacts with Syx17 (via SNARE domain); the interaction requires Vps16A, may involve additional components of the HOPS complex and may promote assembly of the Syx17-Snap29-Vamp7 trans-SNARE complex.

The protein localises to the early endosome. It localises to the late endosome membrane. It is found in the lysosome membrane. In terms of biological role, core component of the class C core vacuole/endosome tethering (CORVET) and the homotypic fusion and vacuole protein sorting (HOPS) tethering complexes involved in endo-lysosomal vesicle trafficking and lysosome biogenesis. The CORVET complex facilitates docking and fusion of endosomal vesicles during endosome maturation, acts upstream of HOPS, but is not involved in autophagic flux. The CORVET complex may cooperate with the early endosomal tether Rbsn-5 to mediate endosomal fusion. The HOPS complex facilitates docking and fusion of lysosomes with late endosomes and several other types of vesicles. The HOPS complex is also involved in autophagy and crinophagy (the elimination of unused secretory granules through their fusion with lysosomes). The HOPS complex probably instigates autophagosome-lysosome fusion by binding autophagosome associated Syx17/syntaxin 17 and promoting assembly of the trans-SNARE complex. Independent of Syx17/syntaxin 17 HOPS is involved in biosynthetic transport to lysosomes and lysosome-related organelles such as eye-pigment granules. Required for endocytic degradation of boss/bride of sevenless and N/Notch in developing ommatidia. This is Vacuolar protein sorting-associated protein 33A from Drosophila melanogaster (Fruit fly).